The sequence spans 401 residues: Probable aspartic-type endopeptidase TRV_05382 (401 aa).

The first 22 residues, 1–22 (MWHSPFFTAFTLFLGFFTLTLA), serve as a signal peptide directing secretion. N80 and N102 each carry an N-linked (GlcNAc...) asparagine glycan. The 305-residue stretch at 94-398 (FVNEITIGNN…DHDGPKMGFA (305 aa)) folds into the Peptidase A1 domain. D110 is an active-site residue. A glycan (N-linked (GlcNAc...) asparagine) is linked at N282. D292 is an active-site residue. Residue N329 is glycosylated (N-linked (GlcNAc...) asparagine).

It belongs to the peptidase A1 family.

The protein resides in the secreted. Probable aspartic-type endopeptidase which contributes to virulence. This chain is Probable aspartic-type endopeptidase TRV_05382, found in Trichophyton verrucosum (strain HKI 0517).